The chain runs to 644 residues: Exoribonuclease 2 (644 aa).

Residues 189-516 enclose the RNB domain; the sequence is RQDLTALNFV…NHRLLKAVIK (328 aa). In terms of domain architecture, S1 motif spans 561-643; that stretch reads NTRFAAEIID…ETRSIIARPA (83 aa).

The protein belongs to the RNR ribonuclease family. RNase II subfamily.

It localises to the cytoplasm. The enzyme catalyses Exonucleolytic cleavage in the 3'- to 5'-direction to yield nucleoside 5'-phosphates.. In terms of biological role, involved in mRNA degradation. Hydrolyzes single-stranded polyribonucleotides processively in the 3' to 5' direction. The polypeptide is Exoribonuclease 2 (Salmonella dublin (strain CT_02021853)).